The chain runs to 65 residues: Translational regulator CsrA (65 aa).

The protein belongs to the CsrA/RsmA family. Homodimer; the beta-strands of each monomer intercalate to form a hydrophobic core, while the alpha-helices form wings that extend away from the core.

The protein resides in the cytoplasm. Functionally, a translational regulator that binds mRNA to regulate translation initiation and/or mRNA stability. Usually binds in the 5'-UTR at or near the Shine-Dalgarno sequence preventing ribosome-binding, thus repressing translation. Its main target seems to be the major flagellin gene, while its function is anatagonized by FliW. This is Translational regulator CsrA from Bordetella petrii (strain ATCC BAA-461 / DSM 12804 / CCUG 43448).